A 463-amino-acid chain; its full sequence is Methionine aminopeptidase 2-1 (463 aa).

The tract at residues 1–98 is disordered; the sequence is MGSKTPEEQI…PPRVPLSDLF (98 aa). The segment covering 30 to 45 has biased composition (basic and acidic residues); the sequence is RGTHLSRDGDGSLGDH. The span at 46-55 shows a compositional bias: acidic residues; the sequence is GDDDDADEDD. The span at 69–81 shows a compositional bias: basic residues; it reads KKKKRPKKKKKPA. Residue His-214 participates in substrate binding. 3 residues coordinate a divalent metal cation: Asp-235, Asp-246, and His-315. His-323 is a substrate binding site. The a divalent metal cation site is built by Glu-348 and Glu-444.

Belongs to the peptidase M24A family. Methionine aminopeptidase eukaryotic type 2 subfamily. Co(2+) serves as cofactor. It depends on Zn(2+) as a cofactor. Mn(2+) is required as a cofactor. Requires Fe(2+) as cofactor.

The protein localises to the cytoplasm. The catalysed reaction is Release of N-terminal amino acids, preferentially methionine, from peptides and arylamides.. Cotranslationally removes the N-terminal methionine from nascent proteins. The N-terminal methionine is often cleaved when the second residue in the primary sequence is small and uncharged (Met-Ala-, Cys, Gly, Pro, Ser, Thr, or Val). This chain is Methionine aminopeptidase 2-1, found in Colletotrichum graminicola (strain M1.001 / M2 / FGSC 10212) (Maize anthracnose fungus).